We begin with the raw amino-acid sequence, 82 residues long: UPF0410 protein YeaQ (82 aa).

2 helical membrane passes run 26–46 (GGGF…GGWI) and 57–77 (GFNF…LFIY).

Belongs to the UPF0410 family.

Its subcellular location is the cell inner membrane. This is UPF0410 protein YeaQ (yeaQ) from Escherichia coli O157:H7.